The sequence spans 207 residues: UPF0319 protein VV1_2115 (207 aa).

An N-terminal signal peptide occupies residues 1–18; that stretch reads MLRVLGLAGMLMSFNIHA.

The protein belongs to the UPF0319 family.

This chain is UPF0319 protein VV1_2115, found in Vibrio vulnificus (strain CMCP6).